The following is a 182-amino-acid chain: Small ribosomal subunit protein uS4c (182 aa).

A disordered region spans residues 8–36 (LGALPGLTSKRPGSGSDPKNKSRSGKRSQ). The region spanning 82-143 (MRLDNILFRL…KQRSKALIQN (62 aa)) is the S4 RNA-binding domain.

The protein belongs to the universal ribosomal protein uS4 family. As to quaternary structure, part of the 30S ribosomal subunit. Contacts protein S5. The interaction surface between S4 and S5 is involved in control of translational fidelity.

The protein resides in the plastid. It is found in the chloroplast. Functionally, one of the primary rRNA binding proteins, it binds directly to 16S rRNA where it nucleates assembly of the body of the 30S subunit. In terms of biological role, with S5 and S12 plays an important role in translational accuracy. This chain is Small ribosomal subunit protein uS4c (rps4), found in Dietes robinsoniana (Lord Howe wedding lily).